We begin with the raw amino-acid sequence, 129 residues long: DNA-directed RNA polymerase III subunit rpc9 (129 aa).

The protein belongs to the eukaryotic RPC9 RNA polymerase subunit family. In terms of assembly, component of the RNA polymerase III (Pol III) complex.

Its subcellular location is the cytoplasm. The protein localises to the nucleus. In terms of biological role, DNA-dependent RNA polymerase catalyzes the transcription of DNA into RNA using the four ribonucleoside triphosphates as substrates. Specific peripheric component of RNA polymerase III which synthesizes small RNAs, such as 5S rRNA and tRNAs. This chain is DNA-directed RNA polymerase III subunit rpc9 (rpc17), found in Schizosaccharomyces pombe (strain 972 / ATCC 24843) (Fission yeast).